Consider the following 37-residue polypeptide: Large ribosomal subunit protein bL36 (37 aa).

The protein belongs to the bacterial ribosomal protein bL36 family.

This Leptospira biflexa serovar Patoc (strain Patoc 1 / Ames) protein is Large ribosomal subunit protein bL36.